A 145-amino-acid polypeptide reads, in one-letter code: Large ribosomal subunit protein uL16 (145 aa).

A compositionally biased stretch (basic and acidic residues) spans 76–95; the sequence is PKTKTPAETRMGKGKGEPEH. Residues 76 to 97 form a disordered region; the sequence is PKTKTPAETRMGKGKGEPEHFV.

It belongs to the universal ribosomal protein uL16 family. In terms of assembly, part of the 50S ribosomal subunit.

Functionally, binds 23S rRNA and is also seen to make contacts with the A and possibly P site tRNAs. This is Large ribosomal subunit protein uL16 from Salinibacter ruber (strain DSM 13855 / M31).